A 64-amino-acid chain; its full sequence is MPKMKSHRGACKRFKKTASGKVKRERMYGSHNLEKKNRKRTRRLHQSTLVDSTQEKQIKRMILA.

The segment covering 1 to 24 (MPKMKSHRGACKRFKKTASGKVKR) has biased composition (basic residues). A disordered region spans residues 1-64 (MPKMKSHRGA…EKQIKRMILA (64 aa)). Positions 25–35 (ERMYGSHNLEK) are enriched in basic and acidic residues. Over residues 36 to 45 (KNRKRTRRLH) the composition is skewed to basic residues.

This sequence belongs to the bacterial ribosomal protein bL35 family.

This chain is Large ribosomal subunit protein bL35, found in Prosthecochloris aestuarii (strain DSM 271 / SK 413).